A 75-amino-acid chain; its full sequence is Dermaseptin-SP5 (75 aa).

Positions 1–22 (MAFLKKSLFLVLFLGLVSLSMC) are cleaved as a signal peptide. Positions 23–45 (EEEKRENEVEEEQEDDEQSELRR) are excised as a propeptide. The segment at 26–46 (KRENEVEEEQEDDEQSELRRS) is disordered. Residues 30 to 40 (EVEEEQEDDEQ) show a composition bias toward acidic residues. Pro-72 is subject to Proline amide. A propeptide spanning residues 74–75 (EQ) is cleaved from the precursor.

The protein belongs to the frog skin active peptide (FSAP) family. Dermaseptin subfamily. Expressed by the skin glands.

Its subcellular location is the secreted. The protein resides in the target cell membrane. Its function is as follows. Antimicrobial peptide with weak activity against Gram-positive and Gram-negative bacteria and fungi. Has been tested against E.coli (MIC=96.06-256 uM), S.aureus (MIC&gt;192.12 uM), K.pneumoniae (MIC&gt;189.00 uM) and C.albicans (MIC=384.24-1024 uM). Probably acts by disturbing membrane functions with its alpha-helical amphipathic structure. May penetrate bacterial membranes, but stay at the mammalian membrane surface. Does not show hemolytic activity. Does not interact at all with cardiolipin. In Agalychnis spurrelli (Gliding leaf frog), this protein is Dermaseptin-SP5.